Consider the following 462-residue polypeptide: Sodium-coupled neutral amino acid transporter 7 (462 aa).

A Phosphoserine modification is found at serine 28. 11 consecutive transmembrane segments (helical) span residues 56–76 (AIFI…PAAF), 82–102 (VAAG…GLVI), 130–150 (LCEV…LIII), 178–198 (FTIS…REIG), 205–225 (FLSV…YIWP), 239–259 (ASWM…QCHV), 282–302 (AAMV…FLTF), 319–339 (MAVA…YPIL), 371–391 (VLQT…IPDI), 395–415 (ISVI…LCLI), and 428–448 (ASWW…AFIF).

It belongs to the amino acid/polyamine transporter 2 family. As to quaternary structure, interacts with the mTORC1 complex; this interaction mediates the recruitment of mTORC1 to the lysosome and its subsequent activation.

Its subcellular location is the lysosome membrane. It is found in the cell projection. It localises to the axon. The catalysed reaction is L-asparagine(in) + Na(+)(in) = L-asparagine(out) + Na(+)(out). It catalyses the reaction L-glutamine(in) + Na(+)(in) = L-glutamine(out) + Na(+)(out). Functionally, symporter that selectively cotransports sodium ions and amino acids, such as L-glutamine and L-asparagine from the lysosome into the cytoplasm and may participates in mTORC1 activation. The transport activity requires an acidic lysosomal lumen. The polypeptide is Sodium-coupled neutral amino acid transporter 7 (Homo sapiens (Human)).